The chain runs to 550 residues: Carboxylesterase 4A (550 aa).

The N-terminal stretch at 1-20 is a signal peptide; sequence MNWILCLSLTLLLVVQTAWG. A disulfide bond links C88 and C116. S221 functions as the Acyl-ester intermediate in the catalytic mechanism. C273 and C284 are joined by a disulfide. An N-linked (GlcNAc...) asparagine glycan is attached at N276. E353 functions as the Charge relay system in the catalytic mechanism. N-linked (GlcNAc...) asparagine glycosylation is present at N386. The active-site Charge relay system is H465.

The protein belongs to the type-B carboxylesterase/lipase family.

The protein resides in the secreted. Probable carboxylesterase. The sequence is that of Carboxylesterase 4A (CES4A) from Bos taurus (Bovine).